A 276-amino-acid polypeptide reads, in one-letter code: Diaminopimelate epimerase (276 aa).

Substrate-binding residues include Asn13, Gln46, and Asn66. The active-site Proton donor is the Cys75. Residues 76–77 (GN), Asn159, Asn192, and 210–211 (ER) each bind substrate. Residue Cys219 is the Proton acceptor of the active site. 220 to 221 (GT) serves as a coordination point for substrate.

This sequence belongs to the diaminopimelate epimerase family. In terms of assembly, homodimer.

It is found in the cytoplasm. The enzyme catalyses (2S,6S)-2,6-diaminopimelate = meso-2,6-diaminopimelate. It functions in the pathway amino-acid biosynthesis; L-lysine biosynthesis via DAP pathway; DL-2,6-diaminopimelate from LL-2,6-diaminopimelate: step 1/1. Its function is as follows. Catalyzes the stereoinversion of LL-2,6-diaminopimelate (L,L-DAP) to meso-diaminopimelate (meso-DAP), a precursor of L-lysine and an essential component of the bacterial peptidoglycan. The chain is Diaminopimelate epimerase from Pseudomonas entomophila (strain L48).